The chain runs to 699 residues: DNA topoisomerase 1 (699 aa).

2 stretches are compositionally biased toward basic and acidic residues: residues 1–15 and 22–35; these read MAKS…KNEL and IELK…ESKG. Residues 1 to 37 form a disordered region; it reads MAKSKVVEKDKKNELDNQSADIELKGQSKNEESKGGK. Positions 38-146 constitute a Toprim domain; it reads KKVIIVESPA…NIITFTEITE (109 aa). Mg(2+)-binding residues include E44 and D115. In terms of domain architecture, Topo IA-type catalytic spans 160-583; that stretch reads DMNKVNAQLA…SFLKEFNKDL (424 aa). An interaction with DNA region spans residues 194 to 199; it reads SAGRVQ. The active-site O-(5'-phospho-DNA)-tyrosine intermediate is Y324. Residues 601–624 form a C4-type zinc finger; the sequence is CEDCSGNYKLKVGKYGLYLHCPNC. A disordered region spans residues 649–699; the sequence is QESQEENGEKNSVQSEESSANSGNRKFYRKRRTSGSKKSSTKSASSKAKKK. Positions 661 to 672 are enriched in polar residues; that stretch reads VQSEESSANSGN. Residues 674–683 are compositionally biased toward basic residues; the sequence is KFYRKRRTSG. Low complexity predominate over residues 684-699; it reads SKKSSTKSASSKAKKK.

It belongs to the type IA topoisomerase family. As to quaternary structure, monomer. Requires Mg(2+) as cofactor.

It carries out the reaction ATP-independent breakage of single-stranded DNA, followed by passage and rejoining.. In terms of biological role, releases the supercoiling and torsional tension of DNA, which is introduced during the DNA replication and transcription, by transiently cleaving and rejoining one strand of the DNA duplex. Introduces a single-strand break via transesterification at a target site in duplex DNA. The scissile phosphodiester is attacked by the catalytic tyrosine of the enzyme, resulting in the formation of a DNA-(5'-phosphotyrosyl)-enzyme intermediate and the expulsion of a 3'-OH DNA strand. The free DNA strand then undergoes passage around the unbroken strand, thus removing DNA supercoils. Finally, in the religation step, the DNA 3'-OH attacks the covalent intermediate to expel the active-site tyrosine and restore the DNA phosphodiester backbone. In Fervidobacterium islandicum, this protein is DNA topoisomerase 1.